Here is a 54-residue protein sequence, read N- to C-terminus: Movement protein p6 (54 aa).

Over 1-10 (MDCVLRSYLL) the chain is Lumenal. A helical transmembrane segment spans residues 11-31 (LAFGFLICLFLFCLVVFIWFV). Residues 32–54 (YKQILFRTTAQSNEARHNHSTVV) lie on the Cytoplasmic side of the membrane.

Homodimer; disulfide-linked.

It localises to the host rough endoplasmic reticulum membrane. Its function is as follows. Transports viral genome to neighboring plant cells directly through plasmosdesmata, without any budding. The movement protein allows efficient cell to cell propagation, by bypassing the host cell wall barrier. Two movement proteins, p6, Hsp70h and three structural proteins, CP, CPm, and P64 are essential for cell-cell movement. Also plays a role in virion formation. Together with CPm and p64, encapsidates the 5'-terminal portion of the viral genome. This is Movement protein p6 from Beet yellows virus (isolate Ukraine) (BYV).